The chain runs to 193 residues: Holliday junction branch migration complex subunit RuvA (193 aa).

The domain I stretch occupies residues 1 to 64; sequence MIGRIAGTLI…EDAHLLYGFG (64 aa). Residues 65-143 form a domain II region; the sequence is TAAERETFRQ…ADLGTVPGGP (79 aa). Positions 144 to 151 are flexible linker; that stretch reads AVSDDAVD. A domain III region spans residues 151 to 193; that stretch reads DVLNALLALGYSDKEAAQAIKQVPAGTGVSEGIKLALKALSKG.

Belongs to the RuvA family. As to quaternary structure, homotetramer. Forms an RuvA(8)-RuvB(12)-Holliday junction (HJ) complex. HJ DNA is sandwiched between 2 RuvA tetramers; dsDNA enters through RuvA and exits via RuvB. An RuvB hexamer assembles on each DNA strand where it exits the tetramer. Each RuvB hexamer is contacted by two RuvA subunits (via domain III) on 2 adjacent RuvB subunits; this complex drives branch migration. In the full resolvosome a probable DNA-RuvA(4)-RuvB(12)-RuvC(2) complex forms which resolves the HJ.

It localises to the cytoplasm. Functionally, the RuvA-RuvB-RuvC complex processes Holliday junction (HJ) DNA during genetic recombination and DNA repair, while the RuvA-RuvB complex plays an important role in the rescue of blocked DNA replication forks via replication fork reversal (RFR). RuvA specifically binds to HJ cruciform DNA, conferring on it an open structure. The RuvB hexamer acts as an ATP-dependent pump, pulling dsDNA into and through the RuvAB complex. HJ branch migration allows RuvC to scan DNA until it finds its consensus sequence, where it cleaves and resolves the cruciform DNA. The chain is Holliday junction branch migration complex subunit RuvA from Ralstonia nicotianae (strain ATCC BAA-1114 / GMI1000) (Ralstonia solanacearum).